The primary structure comprises 657 residues: PAN2-PAN3 deadenylation complex subunit PAN3 (657 aa).

3 disordered regions span residues 1 to 29 (MASA…HAKD), 52 to 98 (HDPS…SATI), and 115 to 135 (SRSN…EWSI). The C3H1-type zinc-finger motif lies at 27-55 (AKDTLCRNVTIYGRCRYEDKGCVFNHDPS). Residues 52–67 (HDPSRVNDAQHPERSS) show a composition bias toward basic and acidic residues. Composition is skewed to polar residues over residues 75–98 (DSPS…SATI) and 115–132 (SRSN…STPE). Residues 259–521 (QTLPNSQLPT…TIDIFISGIS (263 aa)) form a pseudokinase domain region. ATP-binding positions include R311, 360-367 (DYHPLSKT), and 421-422 (SK). A coiled-coil region spans residues 522–560 (SQLMSTFDSSLHLDDQLISDLSRELENARLVRLLTKLNF). The tract at residues 561–657 (INERPEYEHD…QALLKPARRI (97 aa)) is knob domain.

Belongs to the protein kinase superfamily. PAN3 family. Homodimer. Forms a heterotrimer with a catalytic subunit PAN2 to form the poly(A)-nuclease (PAN) deadenylation complex. Interacts (via PAM-2 motif) with poly(A)-binding protein PAB1 (via PABC domain), conferring substrate specificity of the enzyme complex.

It localises to the cytoplasm. In terms of biological role, regulatory subunit of the poly(A)-nuclease (PAN) deadenylation complex, one of two cytoplasmic mRNA deadenylases involved in mRNA turnover. PAN specifically shortens poly(A) tails of RNA and the activity is stimulated by poly(A)-binding protein PAB1. PAN deadenylation is followed by rapid degradation of the shortened mRNA tails by the CCR4-NOT complex. Deadenylated mRNAs are then degraded by two alternative mechanisms, namely exosome-mediated 3'-5' exonucleolytic degradation, or deadenylation-dependent mRNA decaping and subsequent 5'-3' exonucleolytic degradation by XRN1. May also be involved in post-transcriptional maturation of mRNA poly(A) tails. PAN3 acts as a positive regulator for PAN activity, recruiting the catalytic subunit PAN2 to mRNA via its interaction with RNA and with PAB1. The protein is PAN2-PAN3 deadenylation complex subunit PAN3 of Coccidioides immitis (strain RS) (Valley fever fungus).